We begin with the raw amino-acid sequence, 216 residues long: ATP phosphoribosyltransferase (216 aa).

This sequence belongs to the ATP phosphoribosyltransferase family. Short subfamily. In terms of assembly, heteromultimer composed of HisG and HisZ subunits.

Its subcellular location is the cytoplasm. The enzyme catalyses 1-(5-phospho-beta-D-ribosyl)-ATP + diphosphate = 5-phospho-alpha-D-ribose 1-diphosphate + ATP. It functions in the pathway amino-acid biosynthesis; L-histidine biosynthesis; L-histidine from 5-phospho-alpha-D-ribose 1-diphosphate: step 1/9. In terms of biological role, catalyzes the condensation of ATP and 5-phosphoribose 1-diphosphate to form N'-(5'-phosphoribosyl)-ATP (PR-ATP). Has a crucial role in the pathway because the rate of histidine biosynthesis seems to be controlled primarily by regulation of HisG enzymatic activity. The sequence is that of ATP phosphoribosyltransferase from Synechococcus sp. (strain CC9902).